Reading from the N-terminus, the 611-residue chain is UvrABC system protein C (611 aa).

The GIY-YIG domain occupies 6 to 84; that stretch reads NNPGVYRMFN…IKRLRPRFNV (79 aa). The region spanning 194–229 is the UVR domain; it reads QSVKDHLAAAMQAASADLDFEHAAVYRDRLAALSHV.

It belongs to the UvrC family. Interacts with UvrB in an incision complex.

Its subcellular location is the cytoplasm. In terms of biological role, the UvrABC repair system catalyzes the recognition and processing of DNA lesions. UvrC both incises the 5' and 3' sides of the lesion. The N-terminal half is responsible for the 3' incision and the C-terminal half is responsible for the 5' incision. This chain is UvrABC system protein C, found in Brucella abortus (strain 2308).